Reading from the N-terminus, the 415-residue chain is MHHDKRCKESNMKIVKAEVFVTCPGRNFVTLKITTEDGITGLGDATLNGRELSVASYLQDHLCPQLIGRDAHRIEDIWQFFYKGAYWRRGPVTMSAISAVDMALWDIKAKAANMPLYQLLGGASREGVMVYCHTTGHSIDEALDDYARHQELGFKAIRVQCGIPGMKTTYGMSKGKGLAYEPATKGQWPEEQLWSTEKYLDFMPKLFDAVRNKFGFDEHLLHDMHHRLTPIEAARFGKSIEDYRMFWMEDPTPAENQECFRLIRQHTVTPIAVGEVFNSIWDCKQLIEEQLIDYIRTTLTHAGGITGMRRIADFASLYQVRTGSHGPSDLSPVCMAAALHFDLWVPNFGVQEYMGYSEQMLEVFPHNWTFDNGYMHPGEKPGLGIEFDEKLAAKYPYEPAYLPVARLEDGTLWNW.

2 residues coordinate substrate: N48 and H133. Y170 (proton donor/acceptor) is an active-site residue. Residue D223 coordinates Mg(2+). H225 acts as the Proton donor/acceptor in catalysis. 3 residues coordinate Mg(2+): E249, D250, and E275. Positions 275, 296, 325, 329, and 352 each coordinate substrate.

This sequence belongs to the mandelate racemase/muconate lactonizing enzyme family. GalD subfamily. Requires Mg(2+) as cofactor.

The catalysed reaction is D-mannonate = 2-dehydro-3-deoxy-D-gluconate + H2O. In terms of biological role, has low D-mannonate dehydratase activity (in vitro), suggesting that this is not a physiological substrate and that it has no significant role in D-mannonate degradation in vivo. Has no detectable activity with a panel of 70 other acid sugars (in vitro). The sequence is that of D-galactonate dehydratase family member RspA (rspA) from Escherichia coli O6:H1 (strain CFT073 / ATCC 700928 / UPEC).